A 281-amino-acid chain; its full sequence is Auxin-responsive protein IAA19 (281 aa).

Residues leucine 40–leucine 44 carry the EAR-like (transcriptional repression) motif. The disordered stretch occupies residues leucine 66–alanine 126. Residues glycine 79–arginine 91 show a composition bias toward basic and acidic residues. Over residues glycine 114–alanine 126 the composition is skewed to low complexity. Residues cysteine 161–aspartate 265 form the PB1 domain.

Belongs to the Aux/IAA family. Homodimers and heterodimers. In terms of tissue distribution, expressed in etiolated seedlings and flowers.

It localises to the nucleus. Functionally, aux/IAA proteins are short-lived transcriptional factors that function as repressors of early auxin response genes at low auxin concentrations. The sequence is that of Auxin-responsive protein IAA19 (IAA19) from Oryza sativa subsp. japonica (Rice).